The primary structure comprises 559 residues: Mercuric reductase (559 aa).

The region spanning Met1–Thr64 is the HMA domain. Cys10 and Cys13 together coordinate a metal cation. FAD-binding residues include Ala108, Gly128, and Thr133. Residues Cys134 and Cys139 are joined by a disulfide bond. FAD-binding residues include Lys143, Ala209, Asp401, and Val409. Hg(2+) contacts are provided by Cys556 and Cys557.

Belongs to the class-I pyridine nucleotide-disulfide oxidoreductase family. In terms of assembly, homodimer. Requires FAD as cofactor.

The enzyme catalyses Hg + NADP(+) + H(+) = Hg(2+) + NADPH. Resistance to Hg(2+) in bacteria appears to be governed by a specialized system which includes mercuric reductase. MerA protein is responsible for volatilizing mercury as Hg(0). This chain is Mercuric reductase (merA), found in Alcaligenes sp.